The sequence spans 1948 residues: [F-actin]-monooxygenase MICAL2 (1948 aa).

The interval 2–494 (GENEDEKQAQ…KHLYITKEMD (493 aa)) is monooxygenase domain. Residues cysteine 97, 116 to 118 (EKR), 123 to 125 (RNN), phenylalanine 183, tyrosine 298, and aspartate 398 contribute to the FAD site. The 104-residue stretch at 516 to 619 (DIRPNKLLTW…MVMYLSKFYE (104 aa)) folds into the Calponin-homology (CH) domain. At serine 631 the chain carries Phosphoserine. The Nuclear localization signal motif lies at 660–681 (RKRTPRVDAQTEENDVNKRRRQ). 3 disordered regions span residues 664 to 709 (PRVD…ESGN), 753 to 776 (SRPPGTSHCPKLEESTPRLPPPLK), and 891 to 923 (KRVPHAHPPSPPSCLPSPDPAAAPSPPAADSVS). Over residues 693-709 (SSRSLGSSQEYAKESGN) the composition is skewed to polar residues. Over residues 896–917 (AHPPSPPSCLPSPDPAAAPSPP) the composition is skewed to pro residues. The LIM zinc-binding domain occupies 980–1042 (DTCYFCKKRV…KLHFAHCKTS (63 aa)). The Zn(2+) site is built by cysteine 982, cysteine 985, histidine 1003, cysteine 1006, cysteine 1009, cysteine 1012, cysteine 1032, and histidine 1035. 3 disordered regions span residues 1045–1134 (QRKR…GQDG), 1146–1185 (SEDSSSDTESDSGSIIGPCTEACEERPRLPESPPLSQPLT), and 1233–1298 (QSNS…DDVS). Positions 1050–1059 (AELNQQREEE) are enriched in basic and acidic residues. Residues 1233–1243 (QSNSTPMNQRA) are compositionally biased toward polar residues. The span at 1254–1271 (SSSSSPSLPSSFSSASVP) shows a compositional bias: low complexity. Polar residues predominate over residues 1277–1292 (DSSSPQVTYNLHSPQI). An interaction with MAPK1 region spans residues 1300 to 1339 (TPIYLRRARAQGITKEIPLYLPHSPMLESTEHCLVSPDGE). Disordered stretches follow at residues 1478 to 1505 (QKKALGETRTPAAKAPREREVPPPKSPL), 1519 to 1622 (SSEA…SSKV), 1672 to 1726 (GDFF…QAGK), and 1739 to 1767 (SGPGAPVTEDTSSPTSSSAEEDVETQLSS). The segment covering 1522–1534 (AGKKTSSKPETKT) has biased composition (basic and acidic residues). The span at 1570–1579 (KASAFFSLAS) shows a compositional bias: low complexity. Positions 1580–1591 (PTSKAAQASDLS) are enriched in polar residues. The span at 1672-1682 (GDFFNSPKEKG) shows a compositional bias: basic and acidic residues. At serine 1677 the chain carries Phosphoserine. Composition is skewed to polar residues over residues 1698–1715 (VDSTSMGQVAHPSSTGQD) and 1747–1756 (EDTSSPTSSS). The bMERB domain occupies 1786–1936 (KQEELKRLHK…ERTQDQHFEN (151 aa)).

This sequence belongs to the Mical family. In terms of assembly, interacts with PLXNA4. Interacts with RAB1B. Interacts with MAPK1/ERK2. Interacts with RAB35, RAB8A, RAB10, RAB13 and RAB15 (in their GTP-bound forms); binding to RAB35 is of low affinity compared to other Rab proteins; at least in case of RAB8A may bind 2 molecules of RAB8A simultaneously through a high and a low affinity binding site, respectively. May interact with MAPK1/ERK2. It depends on FAD as a cofactor.

The protein localises to the nucleus. It is found in the cytoplasm. The enzyme catalyses L-methionyl-[F-actin] + NADPH + O2 + H(+) = L-methionyl-(R)-S-oxide-[F-actin] + NADP(+) + H2O. Methionine monooxygenase that promotes depolymerization of F-actin by mediating oxidation of residues 'Met-44' and 'Met-47' on actin to form methionine-sulfoxide, resulting in actin filament disassembly and preventing repolymerization. Regulates the disassembly of branched actin networks also by oxidizing ARP3B-containing ARP2/3 complexes leading to ARP3B dissociation from the network. Acts as a key regulator of the SRF signaling pathway elicited by nerve growth factor and serum: mediates oxidation and subsequent depolymerization of nuclear actin, leading to increase MKL1/MRTF-A presence in the nucleus and promote SRF:MKL1/MRTF-A-dependent gene transcription. Does not activate SRF:MKL1/MRTF-A through RhoA. The sequence is that of [F-actin]-monooxygenase MICAL2 from Rattus norvegicus (Rat).